A 313-amino-acid chain; its full sequence is tRNA dimethylallyltransferase (313 aa).

10 to 17 (GPTASGKT) contributes to the ATP binding site. 12–17 (TASGKT) contacts substrate. Interaction with substrate tRNA regions lie at residues 35 to 38 (DSAM), 159 to 163 (QRIQR), and 240 to 245 (RCVGYR).

It belongs to the IPP transferase family. Monomer. Requires Mg(2+) as cofactor.

The enzyme catalyses adenosine(37) in tRNA + dimethylallyl diphosphate = N(6)-dimethylallyladenosine(37) in tRNA + diphosphate. In terms of biological role, catalyzes the transfer of a dimethylallyl group onto the adenine at position 37 in tRNAs that read codons beginning with uridine, leading to the formation of N6-(dimethylallyl)adenosine (i(6)A). This chain is tRNA dimethylallyltransferase, found in Legionella pneumophila (strain Paris).